We begin with the raw amino-acid sequence, 455 residues long: Tryptophan dimethylallyltransferase (455 aa).

Residues 79–80 and Glu-88 contribute to the L-tryptophan site; that span reads VL. Residues Arg-99, Lys-186, and Tyr-188 each coordinate substrate. Positions 190 and 256 each coordinate L-tryptophan. Residues Arg-269, Lys-271, Tyr-273, Gln-355, Tyr-357, Tyr-421, and Tyr-425 each contribute to the substrate site.

The protein belongs to the tryptophan dimethylallyltransferase family. In terms of assembly, homodimer.

It carries out the reaction L-tryptophan + dimethylallyl diphosphate = 4-(3-methylbut-2-enyl)-L-tryptophan + diphosphate. Its pathway is alkaloid biosynthesis; ergot alkaloid biosynthesis. Its function is as follows. Tryptophan dimethylallyltransferase; part of the gene cluster that mediates the biosynthesis of fungal ergot alkaloid. DmaW catalyzes the first step of ergot alkaloid biosynthesis by condensing dimethylallyl diphosphate (DMAP) and tryptophan to form 4-dimethylallyl-L-tryptophan. The second step is catalyzed by the methyltransferase easF that methylates 4-dimethylallyl-L-tryptophan in the presence of S-adenosyl-L-methionine, resulting in the formation of 4-dimethylallyl-L-abrine. The catalase easC and the FAD-dependent oxidoreductase easE then transform 4-dimethylallyl-L-abrine to chanoclavine-I which is further oxidized by easD in the presence of NAD(+), resulting in the formation of chanoclavine-I aldehyde. Agroclavine dehydrogenase easG then mediates the conversion of chanoclavine-I aldehyde to agroclavine via a non-enzymatic adduct reaction: the substrate is an iminium intermediate that is formed spontaneously from chanoclavine-I aldehyde in the presence of glutathione. Further conversion of agroclavine to paspalic acid is a two-step process involving oxidation of agroclavine to elymoclavine and of elymoclavine to paspalic acid, the second step being performed by the elymoclavine oxidase cloA. However, cloA does not encode a functional enzyme indicating that C.fusiformis terminates its ergot alkaloid pathway at elymoclavine. The polypeptide is Tryptophan dimethylallyltransferase (Claviceps fusiformis (Ergot fungus)).